Reading from the N-terminus, the 274-residue chain is 2,3,4,5-tetrahydropyridine-2,6-dicarboxylate N-succinyltransferase (274 aa).

Substrate-binding residues include Arg-107 and Asp-144.

Belongs to the transferase hexapeptide repeat family. As to quaternary structure, homotrimer.

The protein localises to the cytoplasm. The catalysed reaction is (S)-2,3,4,5-tetrahydrodipicolinate + succinyl-CoA + H2O = (S)-2-succinylamino-6-oxoheptanedioate + CoA. It functions in the pathway amino-acid biosynthesis; L-lysine biosynthesis via DAP pathway; LL-2,6-diaminopimelate from (S)-tetrahydrodipicolinate (succinylase route): step 1/3. The polypeptide is 2,3,4,5-tetrahydropyridine-2,6-dicarboxylate N-succinyltransferase (Paracoccus denitrificans (strain Pd 1222)).